Reading from the N-terminus, the 264-residue chain is Short chain dehydrogenase/reductase AacuN (264 aa).

The NADP(+) site is built by Ile-24, Asp-70, Asn-97, and Arg-130. Residues Ser-146, Ser-147, and Tyr-161 each act as proton donor in the active site. Positions 161, 165, and 196 each coordinate NADP(+). Lys-165 (lowers pKa of active site Tyr) is an active-site residue.

The protein belongs to the short-chain dehydrogenases/reductases (SDR) family.

It catalyses the reaction 3,8,9,10-tetrahydroxy-6-methyl-1,4-dihydroanthracen-1-one + NADPH + H(+) = (3R)-3,8,9,10-tetrahydroxy-6-methyl-1,2,3,4-tetrahydroanthracen-1-one + NADP(+). The protein operates within secondary metabolite biosynthesis. Functionally, atrochrysone carboxylic acid synthase; part of the gene cluster that mediates the biosynthesis of the tetrahydroxanthone dimer secalonic acid D. The pathway begins with the synthesis of atrochrysone thioester by the polyketide synthase AacuL. The atrochrysone carboxyl ACP thioesterase AacuM then breaks the thioester bond and releases the atrochrysone carboxylic acid from AacuL. Atrochrysone carboxylic acid is decarboxylated by the decarboxylase AacuI, and oxidized by the anthrone oxygenase AacuG to yield emodin. Emodin is then reduced to emodin hydroquinone by a yet unidentified oxidoreductase. A-ring reduction by the short chain dehydrogenase AacuN, dehydration by the scytalone dehydratase-like protein AacuK and probable spontaneous re-oxidation, results in overall deoxygenation to chrysophanol. Baeyer-Villiger oxidation by the Baeyer-Villiger monooxygenase (BVMO) AacuH then yields monodictyphenone. Monodictyphenone is transformed into compounds with the tetrahydroxanthone skeleton via methylesterification by the methyltransferase AacuQ, followed by the action of the flavin-dependent monooxygenase AacuC, the isomerase AacuP, and the short chain dehydrogenase/reductase AacuF or AacuD. AacuF and AacuD should accept the same compound as a substrate but perform the ketoreduction with a different stereoselectivity, thus yielding blennolides B and A, respectively. In the final step of the biosynthesis, the cytochrome P450 monooxygenase AacuE accepts blennolide B and/or blennolide A to conduct the dimerization reaction to furnish the tetrahydroxanthone dimers, secalonic acids D, B, and F. This chain is Short chain dehydrogenase/reductase AacuN, found in Aspergillus aculeatus (strain ATCC 16872 / CBS 172.66 / WB 5094).